The sequence spans 90 residues: Cell division topological specificity factor (90 aa).

Belongs to the MinE family.

Its function is as follows. Prevents the cell division inhibition by proteins MinC and MinD at internal division sites while permitting inhibition at polar sites. This ensures cell division at the proper site by restricting the formation of a division septum at the midpoint of the long axis of the cell. This Pelotomaculum thermopropionicum (strain DSM 13744 / JCM 10971 / SI) protein is Cell division topological specificity factor.